A 172-amino-acid polypeptide reads, in one-letter code: Shikimate kinase (172 aa).

11–16 is an ATP binding site; the sequence is GTGKTA. A Mg(2+)-binding site is contributed by threonine 15. 3 residues coordinate substrate: aspartate 33, arginine 57, and glycine 79. Arginine 117 is a binding site for ATP. Arginine 136 contacts substrate.

The protein belongs to the shikimate kinase family. Monomer. It depends on Mg(2+) as a cofactor.

Its subcellular location is the cytoplasm. It carries out the reaction shikimate + ATP = 3-phosphoshikimate + ADP + H(+). It functions in the pathway metabolic intermediate biosynthesis; chorismate biosynthesis; chorismate from D-erythrose 4-phosphate and phosphoenolpyruvate: step 5/7. Catalyzes the specific phosphorylation of the 3-hydroxyl group of shikimic acid using ATP as a cosubstrate. The chain is Shikimate kinase from Pelotomaculum thermopropionicum (strain DSM 13744 / JCM 10971 / SI).